The following is a 167-amino-acid chain: Signal peptidase complex catalytic subunit SEC11 (167 aa).

The Cytoplasmic segment spans residues 1-12; that stretch reads MNLRLELTRFLK. Residues 13–30 traverse the membrane as a helical; Signal-anchor for type II membrane protein segment; sequence LCFVLSSAFMFWKGLSIA. The Lumenal portion of the chain corresponds to 31-167; sequence TNSHSPIVVV…LGISALLSNE (137 aa). Catalysis depends on charge relay system residues serine 44, histidine 83, and aspartate 109. Residues 153–164 are C-terminal short (CTS) helix; that stretch reads ALMGFLGISALL.

The protein belongs to the peptidase S26B family. In terms of assembly, component of the signal peptidase complex (SPC) composed of a catalytic subunit SEC11 and three accessory subunits SPC1, SPC2 and SPC3. The complex induces a local thinning of the ER membrane which is used to measure the length of the signal peptide (SP) h-region of protein substrates. This ensures the selectivity of the complex towards h-regions shorter than 18-20 amino acids. SPC associates with the translocon complex.

It is found in the endoplasmic reticulum membrane. The enzyme catalyses Cleavage of hydrophobic, N-terminal signal or leader sequences from secreted and periplasmic proteins.. Functionally, catalytic component of the signal peptidase complex (SPC) which catalyzes the cleavage of N-terminal signal sequences from nascent proteins as they are translocated into the lumen of the endoplasmic reticulum. Specifically cleaves N-terminal signal peptides that contain a hydrophobic alpha-helix (h-region) shorter than 18-20 amino acids. The sequence is that of Signal peptidase complex catalytic subunit SEC11 (SEC11) from Zygosaccharomyces rouxii (strain ATCC 2623 / CBS 732 / NBRC 1130 / NCYC 568 / NRRL Y-229).